We begin with the raw amino-acid sequence, 545 residues long: CTP synthase (545 aa).

The segment at 1 to 266 (MTHFIFVTGG…DDLICERFGF (266 aa)) is amidoligase domain. Position 13 (Ser-13) interacts with CTP. Ser-13 contributes to the UTP binding site. Residues 14–19 (SLGKGI) and Asp-71 contribute to the ATP site. Mg(2+) contacts are provided by Asp-71 and Glu-140. CTP-binding positions include 147–149 (DIE), 187–192 (KTKPTQ), and Lys-223. UTP-binding positions include 187–192 (KTKPTQ) and Lys-223. ATP is bound at residue 239–241 (KDA). The 252-residue stretch at 292-543 (RVAMVGKYVE…IDAAKTQHQK (252 aa)) folds into the Glutamine amidotransferase type-1 domain. An L-glutamine-binding site is contributed by Gly-353. The Nucleophile; for glutamine hydrolysis role is filled by Cys-380. L-glutamine is bound by residues 381 to 384 (LGMQ), Glu-404, and Arg-471. Active-site residues include His-516 and Glu-518.

The protein belongs to the CTP synthase family. As to quaternary structure, homotetramer.

The enzyme catalyses UTP + L-glutamine + ATP + H2O = CTP + L-glutamate + ADP + phosphate + 2 H(+). The catalysed reaction is L-glutamine + H2O = L-glutamate + NH4(+). It carries out the reaction UTP + NH4(+) + ATP = CTP + ADP + phosphate + 2 H(+). It participates in pyrimidine metabolism; CTP biosynthesis via de novo pathway; CTP from UDP: step 2/2. Allosterically activated by GTP, when glutamine is the substrate; GTP has no effect on the reaction when ammonia is the substrate. The allosteric effector GTP functions by stabilizing the protein conformation that binds the tetrahedral intermediate(s) formed during glutamine hydrolysis. Inhibited by the product CTP, via allosteric rather than competitive inhibition. In terms of biological role, catalyzes the ATP-dependent amination of UTP to CTP with either L-glutamine or ammonia as the source of nitrogen. Regulates intracellular CTP levels through interactions with the four ribonucleotide triphosphates. The chain is CTP synthase from Acinetobacter baumannii (strain ACICU).